Reading from the N-terminus, the 76-residue chain is Small ribosomal subunit protein bS18 (76 aa).

Belongs to the bacterial ribosomal protein bS18 family. Part of the 30S ribosomal subunit. Forms a tight heterodimer with protein bS6.

Its function is as follows. Binds as a heterodimer with protein bS6 to the central domain of the 16S rRNA, where it helps stabilize the platform of the 30S subunit. This Stenotrophomonas maltophilia (strain R551-3) protein is Small ribosomal subunit protein bS18.